Reading from the N-terminus, the 256-residue chain is Ribonuclease HII (256 aa).

In terms of domain architecture, RNase H type-2 spans Q72–N256. Positions 78, 79, and 170 each coordinate a divalent metal cation.

It belongs to the RNase HII family. It depends on Mn(2+) as a cofactor. Mg(2+) serves as cofactor.

It localises to the cytoplasm. The enzyme catalyses Endonucleolytic cleavage to 5'-phosphomonoester.. Endonuclease that specifically degrades the RNA of RNA-DNA hybrids. This chain is Ribonuclease HII, found in Limosilactobacillus fermentum (strain NBRC 3956 / LMG 18251) (Lactobacillus fermentum).